Here is a 257-residue protein sequence, read N- to C-terminus: Nickel import system ATP-binding protein NikD (257 aa).

In terms of domain architecture, ABC transporter spans isoleucine 4–isoleucine 245. Glycine 37–serine 44 provides a ligand contact to ATP.

This sequence belongs to the ABC transporter superfamily. As to quaternary structure, the complex is composed of two ATP-binding proteins (NikD and NikE), two transmembrane proteins (NikB and NikC) and a solute-binding protein (NikA).

The protein localises to the cell membrane. The catalysed reaction is Ni(2+)(out) + ATP + H2O = Ni(2+)(in) + ADP + phosphate + H(+). Its function is as follows. Part of the ABC transporter complex NikABCDE (Opp2) involved in nickel import. Probably responsible for energy coupling to the transport system. The polypeptide is Nickel import system ATP-binding protein NikD (Staphylococcus aureus (strain Mu50 / ATCC 700699)).